Reading from the N-terminus, the 349-residue chain is Dihydroorotate dehydrogenase (quinone) (349 aa).

FMN contacts are provided by residues 59–63 (PGFDK) and Thr83. Residue Lys63 participates in substrate binding. 108 to 112 (NRMGF) is a substrate binding site. 2 residues coordinate FMN: Asn142 and Asn173. Residue Asn173 participates in substrate binding. Ser176 serves as the catalytic Nucleophile. Asn178 is a substrate binding site. FMN is bound by residues Lys212 and Ser240. Substrate is bound at residue 241 to 242 (NT). FMN is bound by residues Gly262, Gly291, and 312-313 (YS).

This sequence belongs to the dihydroorotate dehydrogenase family. Type 2 subfamily. As to quaternary structure, monomer. FMN is required as a cofactor.

The protein localises to the cell membrane. It carries out the reaction (S)-dihydroorotate + a quinone = orotate + a quinol. The protein operates within pyrimidine metabolism; UMP biosynthesis via de novo pathway; orotate from (S)-dihydroorotate (quinone route): step 1/1. Its function is as follows. Catalyzes the conversion of dihydroorotate to orotate with quinone as electron acceptor. The protein is Dihydroorotate dehydrogenase (quinone) of Novosphingobium aromaticivorans (strain ATCC 700278 / DSM 12444 / CCUG 56034 / CIP 105152 / NBRC 16084 / F199).